The sequence spans 807 residues: Leucine--tRNA ligase (807 aa).

Residues 40-51 (PYPSGQGLHVGH) carry the 'HIGH' region motif. The 'KMSKS' region motif lies at 575-579 (KMSKS). ATP is bound at residue K578.

Belongs to the class-I aminoacyl-tRNA synthetase family.

The protein localises to the cytoplasm. It carries out the reaction tRNA(Leu) + L-leucine + ATP = L-leucyl-tRNA(Leu) + AMP + diphosphate. The protein is Leucine--tRNA ligase of Latilactobacillus sakei subsp. sakei (strain 23K) (Lactobacillus sakei subsp. sakei).